We begin with the raw amino-acid sequence, 406 residues long: MAKGEFIRTKPHVNVGTIGHVDHGKTTLTAALTYVAAAENPNVEVKDYGEIDKAPEERARGITINTAHVEYETAKRHYSHVDCPGHADYIKNMITGAAQMDGAILVVSAADGPMPQTREHILLARQVGVPYIVVFMNKVDMVDDPELLDLVEMEVRDLLNQYEFPGDEVPVIRGSALLALEQMHRNPKTRRGENEWVDKIWELLDAIDEYIPTPVRDVDKPFLMPVEDVFTITGRGTVATGRIERGKVKVGDEVEIVGLAPETRKTVVTGVEMHRKTLQEGIAGDNVGVLLRGVSREEVERGQVLAKPGSITPHTKFEASVYVLKKEEGGRHTGFFSGYRPQFYFRTTDVTGVVQLPPGVEMVMPGDNVTFTVELIKPVALEEGLRFAIREGGRTVGAGVVTKILE.

Residues 10–215 form the tr-type G domain; it reads KPHVNVGTIG…AIDEYIPTPV (206 aa). Residues 19–26 are G1; that stretch reads GHVDHGKT. 19 to 26 contacts GTP; sequence GHVDHGKT. A Mg(2+)-binding site is contributed by Thr-26. The tract at residues 61–65 is G2; the sequence is GITIN. A G3 region spans residues 82–85; that stretch reads DCPG. GTP is bound by residues 82–86 and 137–140; these read DCPGH and NKVD. Positions 137 to 140 are G4; sequence NKVD. Residues 175 to 177 form a G5 region; it reads SAL.

This sequence belongs to the TRAFAC class translation factor GTPase superfamily. Classic translation factor GTPase family. EF-Tu/EF-1A subfamily. As to quaternary structure, monomer.

The protein resides in the cytoplasm. The enzyme catalyses GTP + H2O = GDP + phosphate + H(+). Functionally, GTP hydrolase that promotes the GTP-dependent binding of aminoacyl-tRNA to the A-site of ribosomes during protein biosynthesis. The polypeptide is Elongation factor Tu (Thermus thermophilus (strain ATCC BAA-163 / DSM 7039 / HB27)).